We begin with the raw amino-acid sequence, 192 residues long: Orotate phosphoribosyltransferase (192 aa).

116–124 (EDIVTTGLS) provides a ligand contact to 5-phospho-alpha-D-ribose 1-diphosphate. Positions 120 and 148 each coordinate orotate.

The protein belongs to the purine/pyrimidine phosphoribosyltransferase family. PyrE subfamily. In terms of assembly, homodimer. It depends on Mg(2+) as a cofactor.

The enzyme catalyses orotidine 5'-phosphate + diphosphate = orotate + 5-phospho-alpha-D-ribose 1-diphosphate. It participates in pyrimidine metabolism; UMP biosynthesis via de novo pathway; UMP from orotate: step 1/2. Catalyzes the transfer of a ribosyl phosphate group from 5-phosphoribose 1-diphosphate to orotate, leading to the formation of orotidine monophosphate (OMP). The protein is Orotate phosphoribosyltransferase of Bartonella henselae (strain ATCC 49882 / DSM 28221 / CCUG 30454 / Houston 1) (Rochalimaea henselae).